A 570-amino-acid polypeptide reads, in one-letter code: Sulfite reductase [NADPH] hemoprotein beta-component (570 aa).

[4Fe-4S] cluster-binding residues include C434, C440, C479, and C483. A siroheme-binding site is contributed by C483.

The protein belongs to the nitrite and sulfite reductase 4Fe-4S domain family. Alpha(8)-beta(8). The alpha component is a flavoprotein, the beta component is a hemoprotein. Siroheme serves as cofactor. [4Fe-4S] cluster is required as a cofactor.

It carries out the reaction hydrogen sulfide + 3 NADP(+) + 3 H2O = sulfite + 3 NADPH + 4 H(+). It participates in sulfur metabolism; hydrogen sulfide biosynthesis; hydrogen sulfide from sulfite (NADPH route): step 1/1. Its function is as follows. Component of the sulfite reductase complex that catalyzes the 6-electron reduction of sulfite to sulfide. This is one of several activities required for the biosynthesis of L-cysteine from sulfate. The sequence is that of Sulfite reductase [NADPH] hemoprotein beta-component from Salmonella arizonae (strain ATCC BAA-731 / CDC346-86 / RSK2980).